A 59-amino-acid polypeptide reads, in one-letter code: Large ribosomal subunit protein uL30 (59 aa).

The protein belongs to the universal ribosomal protein uL30 family. As to quaternary structure, part of the 50S ribosomal subunit.

The sequence is that of Large ribosomal subunit protein uL30 from Desulfatibacillum aliphaticivorans.